A 202-amino-acid polypeptide reads, in one-letter code: LexA repressor (202 aa).

The segment at residues 28 to 48 (RAEIAQELGFKSPNAAEEHLK) is a DNA-binding region (H-T-H motif). Active-site for autocatalytic cleavage activity residues include Ser123 and Lys160.

Belongs to the peptidase S24 family. In terms of assembly, homodimer.

It catalyses the reaction Hydrolysis of Ala-|-Gly bond in repressor LexA.. In terms of biological role, represses a number of genes involved in the response to DNA damage (SOS response), including recA and lexA. In the presence of single-stranded DNA, RecA interacts with LexA causing an autocatalytic cleavage which disrupts the DNA-binding part of LexA, leading to derepression of the SOS regulon and eventually DNA repair. This is LexA repressor from Pseudomonas chlororaphis (Pseudomonas aureofaciens).